The following is a 95-amino-acid chain: Aspartyl/glutamyl-tRNA(Asn/Gln) amidotransferase subunit C (95 aa).

It belongs to the GatC family. In terms of assembly, heterotrimer of A, B and C subunits.

It carries out the reaction L-glutamyl-tRNA(Gln) + L-glutamine + ATP + H2O = L-glutaminyl-tRNA(Gln) + L-glutamate + ADP + phosphate + H(+). The enzyme catalyses L-aspartyl-tRNA(Asn) + L-glutamine + ATP + H2O = L-asparaginyl-tRNA(Asn) + L-glutamate + ADP + phosphate + 2 H(+). Allows the formation of correctly charged Asn-tRNA(Asn) or Gln-tRNA(Gln) through the transamidation of misacylated Asp-tRNA(Asn) or Glu-tRNA(Gln) in organisms which lack either or both of asparaginyl-tRNA or glutaminyl-tRNA synthetases. The reaction takes place in the presence of glutamine and ATP through an activated phospho-Asp-tRNA(Asn) or phospho-Glu-tRNA(Gln). The chain is Aspartyl/glutamyl-tRNA(Asn/Gln) amidotransferase subunit C from Thermoanaerobacter pseudethanolicus (strain ATCC 33223 / 39E) (Clostridium thermohydrosulfuricum).